Consider the following 70-residue polypeptide: Putative defensin-like protein 73 (70 aa).

The first 29 residues, 1–29 (MNCKIEFMSFLVMTSIVILFLFVSGKVEA), serve as a signal peptide directing secretion. Disulfide bonds link Cys33–Cys68, Cys37–Cys57, Cys43–Cys66, and Cys47–Cys67.

Belongs to the DEFL family.

Its subcellular location is the secreted. The protein is Putative defensin-like protein 73 (LCR44) of Arabidopsis thaliana (Mouse-ear cress).